Here is a 197-residue protein sequence, read N- to C-terminus: Peptidyl-tRNA hydrolase (197 aa).

Tyr21 lines the tRNA pocket. His26 acts as the Proton acceptor in catalysis. Residues Tyr72, Asn74, and Asn120 each coordinate tRNA.

It belongs to the PTH family. As to quaternary structure, monomer.

It localises to the cytoplasm. It carries out the reaction an N-acyl-L-alpha-aminoacyl-tRNA + H2O = an N-acyl-L-amino acid + a tRNA + H(+). In terms of biological role, hydrolyzes ribosome-free peptidyl-tRNAs (with 1 or more amino acids incorporated), which drop off the ribosome during protein synthesis, or as a result of ribosome stalling. Its function is as follows. Catalyzes the release of premature peptidyl moieties from peptidyl-tRNA molecules trapped in stalled 50S ribosomal subunits, and thus maintains levels of free tRNAs and 50S ribosomes. The protein is Peptidyl-tRNA hydrolase of Saccharophagus degradans (strain 2-40 / ATCC 43961 / DSM 17024).